The primary structure comprises 883 residues: MEFTGNRVRQLFLEYFEQKGHTIVASSSLVPHNDPTLLFSNAGMNQFKDVFLGFEKRPYLRATTSQKCVRAGGKHNDLDTVGRTARHHTFFEMLGNFSFGDYFKKDAIRYAWEFLTDVCGLPKDKLYATVYLDDDEAFALWRDMIGLPEARILRLGEKDNFWAMGDTGPCGPCSEILIDRGEHLRCKAEECAIGKCDCDRWLEIWNLVFMQYNRDENGTMTPLPRPSIDTGMGLERVTSVLQKVGSNYDTDLLRPLIAFVEQLCGQVYHRDDRGFPFRVIADHIRSCTFLITDGVLPSNEGRGYVLRRILRRAVRFGKVLGIDKPFMYEIVPVVVELMGEAYPDIREKQDFVCKVIKIEEERFHETLHDGMRIAADMVAKVKQEGGNVLPGKQAFTLYDTYGFPLDLAEDIAEENGLTVDKDGFQQAMEAQRERARAARQDTAYGAGMELWAELLQQLGPTVFTGYGRTSGESVVKAIVAGATRVTEAGAGTAVQVVLAETPFYAESGGQIGDSGLLRAGDAVVRVEDTKKMAGGLHVHFGVVAEGVFKEGDQVVAEVESARRLAIARHHSATHLMHKALKEVLGEHVNQAGSLVTPDRLRFDFSHFSPLTRDEWNRIEAAVNRAVFQALPVEVFETSIDEAKAMGATALFGEKYGDRVRVVRMGNYSMELCGGTHLDNTSQVGLCKLLSESGIGAGLRRIEAVTGEAALAYLNEQEETVRMLAEKLKVPAAEVTNRVDSLQAQLREKEREMEQLLSRLAKYQIDDLLAGKEEINGVTVLAAKVQAPDMDALRSMSDLLKEKLGSGVLILGAVAGDKVNLVAAATKDIVGRGVHAGNLVKEAAKVCGGGGGGRPDMAQAGGKDPSRLSDALEAAKKLLKSQIK.

Positions 570, 574, 672, and 676 each coordinate Zn(2+).

The protein belongs to the class-II aminoacyl-tRNA synthetase family. It depends on Zn(2+) as a cofactor.

Its subcellular location is the cytoplasm. It catalyses the reaction tRNA(Ala) + L-alanine + ATP = L-alanyl-tRNA(Ala) + AMP + diphosphate. Its function is as follows. Catalyzes the attachment of alanine to tRNA(Ala) in a two-step reaction: alanine is first activated by ATP to form Ala-AMP and then transferred to the acceptor end of tRNA(Ala). Also edits incorrectly charged Ser-tRNA(Ala) and Gly-tRNA(Ala) via its editing domain. This chain is Alanine--tRNA ligase, found in Heliobacterium modesticaldum (strain ATCC 51547 / Ice1).